Reading from the N-terminus, the 361-residue chain is Alanine racemase 2 (361 aa).

Lys30 serves as the catalytic Proton acceptor; specific for D-alanine. Lys30 bears the N6-(pyridoxal phosphate)lysine mark. Arg122 lines the substrate pocket. The active-site Proton acceptor; specific for L-alanine is Tyr256. Met303 provides a ligand contact to substrate.

The protein belongs to the alanine racemase family. It depends on pyridoxal 5'-phosphate as a cofactor.

The enzyme catalyses L-alanine = D-alanine. It participates in amino-acid biosynthesis; D-alanine biosynthesis; D-alanine from L-alanine: step 1/1. In terms of biological role, catalyzes the interconversion of L-alanine and D-alanine. May also act on other amino acids. The protein is Alanine racemase 2 (alr2) of Staphylococcus aureus (strain COL).